Here is a 695-residue protein sequence, read N- to C-terminus: DNA ligase (695 aa).

NAD(+)-binding positions include 44 to 48 (DAEYD), 93 to 94 (SL), and Glu-124. Lys-126 functions as the N6-AMP-lysine intermediate in the catalytic mechanism. Arg-147, Glu-187, Lys-304, and Lys-328 together coordinate NAD(+). Zn(2+) contacts are provided by Cys-422, Cys-425, Cys-440, and Cys-445. Positions 606–695 (TVQGPLAGKT…GIEVEAAARS (90 aa)) constitute a BRCT domain.

It belongs to the NAD-dependent DNA ligase family. LigA subfamily. Mg(2+) is required as a cofactor. It depends on Mn(2+) as a cofactor.

The enzyme catalyses NAD(+) + (deoxyribonucleotide)n-3'-hydroxyl + 5'-phospho-(deoxyribonucleotide)m = (deoxyribonucleotide)n+m + AMP + beta-nicotinamide D-nucleotide.. Functionally, DNA ligase that catalyzes the formation of phosphodiester linkages between 5'-phosphoryl and 3'-hydroxyl groups in double-stranded DNA using NAD as a coenzyme and as the energy source for the reaction. It is essential for DNA replication and repair of damaged DNA. The polypeptide is DNA ligase (Thermomicrobium roseum (strain ATCC 27502 / DSM 5159 / P-2)).